A 174-amino-acid chain; its full sequence is Co-chaperone protein HscB homolog (174 aa).

The 73-residue stretch at 2 to 74 (NYFELFKFSP…IRRAEHMLSL (73 aa)) folds into the J domain.

Belongs to the HscB family. As to quaternary structure, interacts with HscA and stimulates its ATPase activity.

Its function is as follows. Co-chaperone involved in the maturation of iron-sulfur cluster-containing proteins. Seems to help targeting proteins to be folded toward HscA. This chain is Co-chaperone protein HscB homolog, found in Shewanella baltica (strain OS155 / ATCC BAA-1091).